Here is a 396-residue protein sequence, read N- to C-terminus: Corticosteroid-binding globulin (396 aa).

Positions 1-22 are cleaved as a signal peptide; the sequence is MSLALYTCLLWLCTSGLWTAQA. Residues Asn88 and Asn216 are each glycosylated (N-linked (GlcNAc...) asparagine). Gln246 contacts cortisol. N-linked (GlcNAc...) asparagine glycosylation is present at Asn252. Position 278 (Asp278) interacts with cortisol. N-linked (GlcNAc...) asparagine glycosylation is found at Asn319 and Asn352. Trp384 provides a ligand contact to cortisol.

Belongs to the serpin family. As to expression, expressed by the liver; secreted in plasma.

Its subcellular location is the secreted. Functionally, major transport protein for glucocorticoids and progestins in the blood of almost all vertebrate species. This chain is Corticosteroid-binding globulin (Serpina6), found in Rattus norvegicus (Rat).